The following is a 373-amino-acid chain: MEAFAVAIQSVINDSGFLAFTTGNAIMILVGLILLYLAFAREFEPLLLGPIAFGCLLANIPRNGFEEGVMALISAGISQEIFPPLIFLGVGAMTDFGPLIANPKTLLLGAAAQIGVFAALGGAMMLGFTAQEAAAIGIIGGADGPTSIYLATKLAPHLLGAIAVAAYSYMSLVPLIQPPVMKLFTTQKEREIVMEQLREVTRFEKIVFPIVATIFISLLLPSITSLLGMLMLGNLFRESGVTDRLSDTSQNALINTVTIFLATGTGLTMSAEHFLSLETIKIILLGLFAFICGTAGGVLFGKLMSLVDGGKTNPLIGSAGVSAVPMAARVSQVVGAKANPANFLLMHAMGPNVAGVIGTAVAAGTMLAMLSNH.

Transmembrane regions (helical) follow at residues 17–37 (FLAF…LLYL), 38–58 (AFAR…CLLA), 81–101 (IFPP…PLIA), 106–126 (LLLG…AMML), 132–152 (EAAA…YLAT), 156–176 (PHLL…VPLI), 206–226 (IVFP…ITSL), 257–277 (VTIF…FLSL), 280–300 (IKII…GVLF), and 343–363 (FLLM…AVAA).

Belongs to the GcdB/MmdB/OadB family. In terms of assembly, the methylmalonyl-CoA decarboxylase is composed of five subunits: the carboxyltransferase alpha subunit (MmdA), the tunnel beta subunit (MmdB), the biotin-containing gamma subunit (MmdC), and the delta (MmdD) and epsilon (MmdE) subunits. In terms of processing, the N-terminus is blocked.

It is found in the cell membrane. It catalyses the reaction (S)-methylmalonyl-CoA + Na(+)(in) + H(+)(out) = propanoyl-CoA + Na(+)(out) + CO2. Completely inhibited by avidin. Its function is as follows. Tunnel subunit of the sodium ion pump methylmalonyl-CoA decarboxylase, which converts the chemical energy of a decarboxylation reaction into an electrochemical gradient of Na(+) ions across the cytoplasmic membrane, thereby creating a sodium ion motive force that is used for ATP synthesis. The beta subunit catalyzes the decarboxylation of the carboxybiotin carrier protein and the coupled export of Na(+) ions. Can also convert malonyl-CoA into acetyl-CoA. In Veillonella parvula (Staphylococcus parvulus), this protein is Methylmalonyl-CoA decarboxylase subunit beta.